Consider the following 273-residue polypeptide: Phosphate import ATP-binding protein PstB (273 aa).

The ABC transporter domain occupies 17-259 (LSAENLSIFY…DKTNNIFQNP (243 aa)). Position 49-56 (49-56 (GPSGCGKS)) interacts with ATP.

It belongs to the ABC transporter superfamily. Phosphate importer (TC 3.A.1.7) family. As to quaternary structure, the complex is composed of two ATP-binding proteins (PstB), two transmembrane proteins (PstC and PstA) and a solute-binding protein (PstS).

The protein localises to the cell inner membrane. The enzyme catalyses phosphate(out) + ATP + H2O = ADP + 2 phosphate(in) + H(+). Its function is as follows. Part of the ABC transporter complex PstSACB involved in phosphate import. Responsible for energy coupling to the transport system. The sequence is that of Phosphate import ATP-binding protein PstB from Trichodesmium erythraeum (strain IMS101).